Reading from the N-terminus, the 302-residue chain is Probable alpha-L-glutamate ligase (302 aa).

The region spanning 112 to 294 is the ATP-grasp domain; that stretch reads LQLLLKAGIP…IAAEIIDYIE (183 aa). ATP is bound by residues Lys148, 185–186, Asp194, and 218–220; these read DF and RAN. The Mg(2+) site is built by Asp255, Glu267, and Asn269. Mn(2+) is bound by residues Asp255, Glu267, and Asn269.

The protein belongs to the RimK family. Mg(2+) serves as cofactor. Requires Mn(2+) as cofactor.

The protein is Probable alpha-L-glutamate ligase of Haemophilus influenzae (strain ATCC 51907 / DSM 11121 / KW20 / Rd).